The chain runs to 855 residues: Transcription factor gaf1 (855 aa).

Positions 72-112 (KNLTPNGDSNTLTPDTFSDPTAPSSAQSVPPTSSAETTADN) are enriched in polar residues. 6 disordered regions span residues 72 to 126 (KNLT…PAYS), 149 to 184 (TSFD…ESQP), 229 to 287 (SHNL…GFPS), 412 to 483 (PNSN…DMFS), 602 to 643 (NKNA…TRTT), and 680 to 768 (KKRN…SQSM). The segment covering 149-168 (TSFDESTAKSKKRSIADSHF) has biased composition (basic and acidic residues). Position 150 is a phosphoserine (Ser150). 2 stretches are compositionally biased toward low complexity: residues 240–250 (PANSNNSASPN) and 428–444 (NSSK…DSNQ). A compositionally biased stretch (polar residues) spans 445 to 476 (ENAESFNPSISSHNSAEWASGETTGHSSNSPL). The span at 614 to 623 (AEDKKGDANT) shows a compositional bias: basic and acidic residues. Low complexity-rich tracts occupy residues 625 to 643 (RANA…TRTT) and 707 to 717 (SKSSSAKSTAA). A GATA-type zinc finger spans residues 635-659 (CTNCQTRTTPLWRRSPDGQPLCNAC). Phosphoserine is present on residues Ser727 and Ser729. Residues 755–767 (QQQSSENESKSQS) show a composition bias toward low complexity.

The protein localises to the nucleus. Functionally, transcriptional activator. The chain is Transcription factor gaf1 (gaf1) from Schizosaccharomyces pombe (strain 972 / ATCC 24843) (Fission yeast).